A 436-amino-acid polypeptide reads, in one-letter code: Enolase (436 aa).

Residue Gln-167 participates in (2R)-2-phosphoglycerate binding. Glu-209 acts as the Proton donor in catalysis. Asp-246, Glu-291, and Asp-318 together coordinate Mg(2+). (2R)-2-phosphoglycerate is bound by residues Lys-343, Arg-372, Ser-373, and Lys-394. Lys-343 (proton acceptor) is an active-site residue.

This sequence belongs to the enolase family. In terms of assembly, component of the RNA degradosome, a multiprotein complex involved in RNA processing and mRNA degradation. Mg(2+) serves as cofactor.

It is found in the cytoplasm. Its subcellular location is the secreted. It localises to the cell surface. The enzyme catalyses (2R)-2-phosphoglycerate = phosphoenolpyruvate + H2O. It functions in the pathway carbohydrate degradation; glycolysis; pyruvate from D-glyceraldehyde 3-phosphate: step 4/5. In terms of biological role, catalyzes the reversible conversion of 2-phosphoglycerate (2-PG) into phosphoenolpyruvate (PEP). It is essential for the degradation of carbohydrates via glycolysis. The protein is Enolase of Actinobacillus pleuropneumoniae serotype 5b (strain L20).